An 87-amino-acid chain; its full sequence is Large ribosomal subunit protein bL27 (87 aa).

The disordered stretch occupies residues 1 to 20 (MAHKKAGGSSRNGRDSESKR).

Belongs to the bacterial ribosomal protein bL27 family.

In Thiobacillus denitrificans (strain ATCC 25259 / T1), this protein is Large ribosomal subunit protein bL27.